The primary structure comprises 455 residues: Argininosuccinate lyase (455 aa).

The protein belongs to the lyase 1 family. Argininosuccinate lyase subfamily.

The protein resides in the cytoplasm. The enzyme catalyses 2-(N(omega)-L-arginino)succinate = fumarate + L-arginine. Its pathway is amino-acid biosynthesis; L-arginine biosynthesis; L-arginine from L-ornithine and carbamoyl phosphate: step 3/3. The polypeptide is Argininosuccinate lyase (Shewanella sp. (strain ANA-3)).